Consider the following 774-residue polypeptide: 5-methyltetrahydropteroyltriglutamate--homocysteine methyltransferase (774 aa).

5-methyltetrahydropteroyltri-L-glutamate contacts are provided by residues 23–26 (RELK) and Lys123. L-homocysteine contacts are provided by residues 446-448 (IGS) and Glu499. L-methionine is bound by residues 446 to 448 (IGS) and Glu499. 5-methyltetrahydropteroyltri-L-glutamate is bound by residues 530 to 531 (RC) and Trp576. Asp614 is an L-homocysteine binding site. Asp614 lines the L-methionine pocket. Glu620 lines the 5-methyltetrahydropteroyltri-L-glutamate pocket. Zn(2+)-binding residues include His656, Cys658, and Glu680. The Proton donor role is filled by His709. Cys741 lines the Zn(2+) pocket.

The protein belongs to the vitamin-B12 independent methionine synthase family. It depends on Zn(2+) as a cofactor.

It catalyses the reaction 5-methyltetrahydropteroyltri-L-glutamate + L-homocysteine = tetrahydropteroyltri-L-glutamate + L-methionine. It functions in the pathway amino-acid biosynthesis; L-methionine biosynthesis via de novo pathway; L-methionine from L-homocysteine (MetE route): step 1/1. Functionally, catalyzes the transfer of a methyl group from 5-methyltetrahydrofolate to homocysteine resulting in methionine formation. The protein is 5-methyltetrahydropteroyltriglutamate--homocysteine methyltransferase of Aliivibrio fischeri (strain ATCC 700601 / ES114) (Vibrio fischeri).